The primary structure comprises 538 residues: Tetracenomycin C resistance and export protein (538 aa).

The next 14 membrane-spanning stretches (helical) occupy residues 28 to 48, 65 to 85, 100 to 120, 126 to 146, 154 to 174, 181 to 201, 213 to 233, 239 to 259, 286 to 306, 319 to 339, 342 to 362, 371 to 391, 413 to 433, and 494 to 514; these read LLAV…VAIA, WITN…GKLG, GFAV…IVVF, LFGA…FPPG, IWSG…GLLV, AVFF…LVIL, FDVS…WGLI, GWGD…FAGF, VLMV…TFYL, VHLL…GIVI, FGPG…LWGM, MGIT…VMVG, QSAM…LMAS, and MGLA…VALF.

This sequence belongs to the major facilitator superfamily. EmrB family.

It is found in the cell membrane. The protein operates within antibiotic biosynthesis; tetracenomycin C biosynthesis. Functionally, resistance to tetracenomycin C by an active tetracenomycin C efflux system which is probably energized by transmembrane electrochemical gradients. This Streptomyces glaucescens protein is Tetracenomycin C resistance and export protein (tcmA).